The sequence spans 167 residues: Xanthine-guanine phosphoribosyltransferase (167 aa).

5-phospho-alpha-D-ribose 1-diphosphate is bound by residues 47–48 (RG), Gln-79, and 102–110 (DDLVDSGKT). Residue Gln-79 participates in GMP binding. Residue Asp-103 coordinates Mg(2+). Guanine contacts are provided by Asp-106 and Ile-149. Xanthine contacts are provided by Asp-106 and Ile-149. Residues 106–110 (DSGKT) and 148–149 (WI) each bind GMP.

It belongs to the purine/pyrimidine phosphoribosyltransferase family. XGPT subfamily. As to quaternary structure, homotetramer. Mg(2+) is required as a cofactor.

It localises to the cell inner membrane. The catalysed reaction is GMP + diphosphate = guanine + 5-phospho-alpha-D-ribose 1-diphosphate. It catalyses the reaction XMP + diphosphate = xanthine + 5-phospho-alpha-D-ribose 1-diphosphate. It carries out the reaction IMP + diphosphate = hypoxanthine + 5-phospho-alpha-D-ribose 1-diphosphate. Its pathway is purine metabolism; GMP biosynthesis via salvage pathway; GMP from guanine: step 1/1. The protein operates within purine metabolism; XMP biosynthesis via salvage pathway; XMP from xanthine: step 1/1. Its function is as follows. Purine salvage pathway enzyme that catalyzes the transfer of the ribosyl-5-phosphate group from 5-phospho-alpha-D-ribose 1-diphosphate (PRPP) to the N9 position of the 6-oxopurines guanine and xanthine to form the corresponding ribonucleotides GMP (guanosine 5'-monophosphate) and XMP (xanthosine 5'-monophosphate), with the release of PPi. To a lesser extent, also acts on hypoxanthine. The chain is Xanthine-guanine phosphoribosyltransferase from Cereibacter sphaeroides (strain ATCC 17029 / ATH 2.4.9) (Rhodobacter sphaeroides).